Here is a 233-residue protein sequence, read N- to C-terminus: MIEHLGINTPYFGILVSLIPFVIATYFYKKTNGFFLLAPLFVSMVAGIAFLKLTGISYENYKIGGDIINFFLEPATICFAIPLYRKREVLKKYWLQIFGGIAVGTIIALLLIYLVAITFQFGNQIIASMLPQAATTAIALPVSDGIGGVKELTSLAVILNAVVISALGAKIVKLFKISNPIARGLALGTSGHTLGVAAAKELGETEESMGSIAVVIVGVIVVAVVPILAPILL.

A run of 6 helical transmembrane segments spans residues 5-25, 33-53, 63-83, 97-117, 152-172, and 212-232; these read LGINTPYFGILVSLIPFVIAT, GFFLLAPLFVSMVAGIAFLKL, IGGDIINFFLEPATICFAIPL, IFGGIAVGTIIALLLIYLVAI, LTSLAVILNAVVISALGAKIV, and IAVVIVGVIVVAVVPILAPIL.

This sequence belongs to the CidB/LrgB family. LrgB subfamily.

The protein localises to the cell membrane. Its function is as follows. Inhibits the expression or activity of extracellular murein hydrolases by interacting, possibly with LrgA, with the holin-like proteins CidA and/or CidB. The LrgAB and CidAB proteins may affect the proton motive force of the membrane. May be involved in programmed cell death (PCD), possibly triggering PCD in response to antibiotics and environmental stresses. The sequence is that of Antiholin-like protein LrgB from Staphylococcus epidermidis (strain ATCC 35984 / DSM 28319 / BCRC 17069 / CCUG 31568 / BM 3577 / RP62A).